The primary structure comprises 420 residues: Hemojuvelin (420 aa).

An N-terminal signal peptide occupies residues 1–32; it reads MGQSPSPRSPHGSPPTLSTLTLLLLLCGQAHS. The residue at position 43 (Y43) is a Phosphotyrosine. N-linked (GlcNAc...) asparagine glycosylation occurs at N111. The tract at residues 113–135 is disordered; that stretch reads SRQGPTAPPPARGPALPGAGPAP. A compositionally biased stretch (low complexity) spans 125–134; the sequence is GPALPGAGPA. 2 disulfides stabilise this stretch: C141–C223 and C160–C310. N-linked (GlcNAc...) asparagine glycans are attached at residues N206 and N365. D393 carries the GPI-anchor amidated aspartate lipid modification. A propeptide spans 394 to 420 (removed in mature form); the sequence is AGPPLSPAICLVPLLSALFVLWLCFSK.

Belongs to the repulsive guidance molecule (RGM) family. Interacts with BMP2 and BMP4. Interacts with BMP6. Interacts with BMPR1B. Interacts with TMPRSS6. In terms of processing, autocatalytically cleaved at low pH; the two chains remain linked via two disulfide bonds. Also proteolytically processed by TMPRSS6, several fragments being released in the extracellular space; regulates HJV activity in BMP signaling and thefore iron homeostasis. As to expression, muscle cell lineage.

The protein resides in the cell membrane. In terms of biological role, acts as a bone morphogenetic protein (BMP) coreceptor. Through enhancement of BMP signaling regulates hepcidin (HAMP) expression and regulates iron homeostasis. In Mus musculus (Mouse), this protein is Hemojuvelin.